The following is an 89-amino-acid chain: ATP synthase subunit c, sodium ion specific (89 aa).

Helical transmembrane passes span 9 to 29 (VVLA…IGPG) and 68 to 88 (GIYS…VGLL).

The protein belongs to the ATPase C chain family. As to quaternary structure, F-type ATPases have 2 components, F(1) - the catalytic core - and F(0) - the membrane sodium channel. F(1) has five subunits: alpha(3), beta(3), gamma(1), delta(1), epsilon(1). F(0) has three main subunits: a(1), b(2) and c(10-14). The alpha and beta chains form an alternating ring which encloses part of the gamma chain. F(1) is attached to F(0) by a central stalk formed by the gamma and epsilon chains, while a peripheral stalk is formed by the delta and b chains.

The protein resides in the cell membrane. Functionally, f(1)F(0) ATP synthase produces ATP from ADP in the presence of a proton or sodium gradient. F-type ATPases consist of two structural domains, F(1) containing the extramembraneous catalytic core and F(0) containing the membrane sodium channel, linked together by a central stalk and a peripheral stalk. During catalysis, ATP synthesis in the catalytic domain of F(1) is coupled via a rotary mechanism of the central stalk subunits to sodium translocation. Key component of the F(0) channel; it plays a direct role in translocation across the membrane. A homomeric c-ring of between 10-14 subunits forms the central stalk rotor element with the F(1) delta and epsilon subunits. In Propionigenium modestum, this protein is ATP synthase subunit c, sodium ion specific (atpE).